Reading from the N-terminus, the 296-residue chain is Putative S-adenosyl-L-methionine-dependent methyltransferase MAV_4764 (296 aa).

Residues D121 and 150–151 (DL) each bind S-adenosyl-L-methionine.

The protein belongs to the UPF0677 family.

Its function is as follows. Exhibits S-adenosyl-L-methionine-dependent methyltransferase activity. The polypeptide is Putative S-adenosyl-L-methionine-dependent methyltransferase MAV_4764 (Mycobacterium avium (strain 104)).